Consider the following 490-residue polypeptide: Glutathione reductase (490 aa).

Residues S19 and G20 each contribute to the FAD site. S19 is a glutathione binding site. R26 is a glutathione binding site. The FAD site is built by E39, T48, C49, and K57. C49 and C54 are joined by a disulfide. Y110 lines the glutathione pocket. A126 contributes to the FAD binding site. NADP(+)-binding residues include A208, I211, E214, R231, and R237. S246 lines the glutathione pocket. Position 297 (G297) interacts with NADP(+). FAD is bound at residue D337. E343 serves as a coordination point for NADP(+). T345 contacts FAD. R353 is a glutathione binding site. V379 contacts NADP(+). K432 contacts glutathione. H479 serves as a coordination point for FAD. H479 functions as the Proton acceptor in the catalytic mechanism.

This sequence belongs to the class-I pyridine nucleotide-disulfide oxidoreductase family. As to quaternary structure, homodimer. Requires FAD as cofactor.

It localises to the cytoplasm. It is found in the mitochondrion. It catalyses the reaction 2 glutathione + NADP(+) = glutathione disulfide + NADPH + H(+). Its function is as follows. Catalyzes the reduction of glutathione disulfide (GSSG) to reduced glutathione (GSH). Constitutes the major mechanism to maintain a high GSH:GSSG ratio in the cytosol. This chain is Glutathione reductase (GLR1), found in Debaryomyces hansenii (strain ATCC 36239 / CBS 767 / BCRC 21394 / JCM 1990 / NBRC 0083 / IGC 2968) (Yeast).